Consider the following 523-residue polypeptide: GMP synthase [glutamine-hydrolyzing] (523 aa).

One can recognise a Glutamine amidotransferase type-1 domain in the interval 8 to 205 (RILILDFGSQ…IRELCECEAL (198 aa)). Cys85 functions as the Nucleophile in the catalytic mechanism. Catalysis depends on residues His179 and Glu181. A GMPS ATP-PPase domain is found at 206–398 (WTPSNIISDA…LGLPYDMVYR (193 aa)). 233–239 (SGGVDSS) is a binding site for ATP.

In terms of assembly, homodimer.

It catalyses the reaction XMP + L-glutamine + ATP + H2O = GMP + L-glutamate + AMP + diphosphate + 2 H(+). It participates in purine metabolism; GMP biosynthesis; GMP from XMP (L-Gln route): step 1/1. In terms of biological role, catalyzes the synthesis of GMP from XMP. In Alcanivorax borkumensis (strain ATCC 700651 / DSM 11573 / NCIMB 13689 / SK2), this protein is GMP synthase [glutamine-hydrolyzing].